A 94-amino-acid chain; its full sequence is UPF0298 protein SEQ_1830 (94 aa).

This sequence belongs to the UPF0298 family.

It is found in the cytoplasm. In Streptococcus equi subsp. equi (strain 4047), this protein is UPF0298 protein SEQ_1830.